The following is a 374-amino-acid chain: Glutamate 5-kinase (374 aa).

Lys17 is an ATP binding site. The substrate site is built by Ser57, Asp144, and Asn156. ATP contacts are provided by residues 176-177 (SD) and 218-224 (TGGMVTK). Residues 280–358 (QGALVLDDGA…RELARELGPA (79 aa)) form the PUA domain.

Belongs to the glutamate 5-kinase family.

It is found in the cytoplasm. It catalyses the reaction L-glutamate + ATP = L-glutamyl 5-phosphate + ADP. Its pathway is amino-acid biosynthesis; L-proline biosynthesis; L-glutamate 5-semialdehyde from L-glutamate: step 1/2. Catalyzes the transfer of a phosphate group to glutamate to form L-glutamate 5-phosphate. This is Glutamate 5-kinase from Streptomyces coelicolor (strain ATCC BAA-471 / A3(2) / M145).